A 61-amino-acid polypeptide reads, in one-letter code: Bacteriocin sakacin-P (61 aa).

Positions Met-1–Gly-18 are excised as a propeptide. Cys-27 and Cys-32 form a disulfide bridge.

It belongs to the bacteriocin class IIA/YGNGV family.

It is found in the secreted. Functionally, bactericidal activity; inhibits closely related Lactobacilli, Listeria monocytogenes and ivanovvi, Enterococcus faecalis, Carnobacterium sp and Brocothrix thermosphacta. The chain is Bacteriocin sakacin-P (sakP) from Latilactobacillus sakei (Lactobacillus sakei).